We begin with the raw amino-acid sequence, 701 residues long: Aryl hydrocarbon receptor repressor (701 aa).

Positions 1 to 38 are disordered; it reads MMIPSGECTYAGRKRRKPIQKRRLTMGTEKSNPSKRHR. Residues 12-24 show a composition bias toward basic residues; the sequence is GRKRRKPIQKRRL. The bHLH domain maps to 25-78; the sequence is TMGTEKSNPSKRHRDRLNTELDHLASLLPFSPDIISKLDKLSVLRLSVSYLRVK. The PAS domain maps to 106–176; the sequence is PVQEGRLLLE…RQLHWAMDPP (71 aa). Disordered stretches follow at residues 360–389 and 409–436; these read DPKG…QREM and TEQR…LVPH. A compositionally biased stretch (basic and acidic residues) spans 365-375; sequence SGDREEDDQKH. Positions 414-430 are enriched in polar residues; that stretch reads QEGTTKLTRQPSKSEPS. The interval 555 to 701 is needed for transcriptional repression; the sequence is ASTTSCVWLG…SKGSDGIFLP (147 aa). Glycyl lysine isopeptide (Lys-Gly) (interchain with G-Cter in SUMO2) cross-links involve residues K583 and K660.

As to quaternary structure, interacts with ARNT, ANKRA2, HDAC4 and HDAC5. Interacts with ARNT; forms a heterodimer with ARNT. As to expression, highly expressed in testis and weakly expressed in heart and liver. Highly expressed in small intestine and cecum in a male-dominant sexual dimorphic fashion.

It is found in the cytoplasm. Its subcellular location is the nucleus. In terms of biological role, mediates dioxin toxicity and is involved in regulation of cell growth and differentiation. Represses the transcription activity of AHR by competing with this transcription factor for heterodimer formation with the ARNT and subsequently binding to the xenobiotic response element (XRE) sequence present in the promoter regulatory region of variety of genes. Represses CYP1A1 by binding the XRE sequence and recruiting ANKRA2, HDAC4 and/or HDAC5. Autoregulates its expression by associating with its own XRE site. The polypeptide is Aryl hydrocarbon receptor repressor (Ahrr) (Rattus norvegicus (Rat)).